The primary structure comprises 168 residues: uncharacterized protein (168 aa).

The next 2 membrane-spanning stretches (helical) occupy residues 41–61 (LLPW…LFFI) and 133–153 (KFVI…FFVL).

It localises to the cell membrane. This is an uncharacterized protein from Thermotoga maritima (strain ATCC 43589 / DSM 3109 / JCM 10099 / NBRC 100826 / MSB8).